We begin with the raw amino-acid sequence, 132 residues long: Small ribosomal subunit protein uS8c (132 aa).

Belongs to the universal ribosomal protein uS8 family. Part of the 30S ribosomal subunit.

It is found in the plastid. It localises to the chloroplast. One of the primary rRNA binding proteins, it binds directly to 16S rRNA central domain where it helps coordinate assembly of the platform of the 30S subunit. This is Small ribosomal subunit protein uS8c (rps8) from Zygnema circumcarinatum (Green alga).